Reading from the N-terminus, the 525-residue chain is Sucrose transport protein (525 aa).

At 1–37 (MAGRNIKNGENNKIAGSSLHLEKNPTTPPEAEATLKK) the chain is on the cytoplasmic side. 12 helical membrane-spanning segments follow: residues 38-58 (LGLV…QLSL), 72-92 (WAAY…PLVG), 107-127 (PFIA…GFAA), 145-165 (AIAV…TLQG), 184-204 (YANA…YAAG), 230-250 (SCFF…LSVV), 295-315 (MLIL…FLLF), 338-358 (GVHA…VMSL), 373-393 (LWGI…LVTK), 422-442 (LAIF…PFAL), 455-475 (GLSL…VSVT), and 488-508 (LPAF…SFTL). The Cytoplasmic segment spans residues 509-525 (LPSPPPEAKIGGSMGGH).

It belongs to the glycoside-pentoside-hexuronide (GPH) cation symporter transporter (TC 2.A.2.4) family.

Its subcellular location is the membrane. It participates in glycan biosynthesis; sucrose metabolism. Responsible for the transport of sucrose into the cell, with the concomitant uptake of protons (symport system). Can also transport maltose at a lesser rate. The chain is Sucrose transport protein from Spinacia oleracea (Spinach).